The primary structure comprises 228 residues: Sugar fermentation stimulation protein homolog (228 aa).

Belongs to the SfsA family.

The chain is Sugar fermentation stimulation protein homolog from Desulfitobacterium hafniense (strain DSM 10664 / DCB-2).